The chain runs to 396 residues: LIM/homeobox protein Lhx9 (396 aa).

2 LIM zinc-binding domains span residues 69–130 and 131–193; these read ALCA…RFSV and QRCA…LIQG. Disordered regions lie at residues 248 to 272, 328 to 365, and 377 to 396; these read ENDA…RMRT, RQEN…TDLT, and SSLD…TNLF. Residues 267 to 326 constitute a DNA-binding region (homeobox); that stretch reads TKRMRTSFKHHQLRTMKSYFAINHNPDAKDLKQLAQKTGLTKRVLQVWFQNARAKFRRNV. Low complexity predominate over residues 352-365; that stretch reads LTPPSTATTLTDLT. The span at 384 to 396 shows a compositional bias: polar residues; sequence SGSPPQTTLTNLF.

It is found in the nucleus. In terms of biological role, may be involved in gonadal development. This is LIM/homeobox protein Lhx9 (lhx9) from Danio rerio (Zebrafish).